The primary structure comprises 88 residues: Protein U62 (88 aa).

The chain is Protein U62 from Elephantid herpesvirus 1 (isolate Asian elephant/Berlin/Kiba/1998) (EIHV-1).